Consider the following 191-residue polypeptide: UPF0149 protein plu3602 (191 aa).

The protein belongs to the UPF0149 family.

The sequence is that of UPF0149 protein plu3602 from Photorhabdus laumondii subsp. laumondii (strain DSM 15139 / CIP 105565 / TT01) (Photorhabdus luminescens subsp. laumondii).